Here is a 430-residue protein sequence, read N- to C-terminus: Small ribosomal subunit protein uS3m (430 aa).

The protein belongs to the universal ribosomal protein uS3 family.

The protein resides in the mitochondrion. The chain is Small ribosomal subunit protein uS3m (RPS3) from Marchantia polymorpha (Common liverwort).